Reading from the N-terminus, the 276-residue chain is Pantothenate synthetase (276 aa).

An ATP-binding site is contributed by Met-27–His-34. The Proton donor role is filled by His-34. Residue Gln-58 participates in (R)-pantoate binding. Gln-58 contributes to the beta-alanine binding site. Gly-147–Asp-150 is an ATP binding site. Gln-153 serves as a coordination point for (R)-pantoate. Residues Ala-176 and Leu-184–Arg-187 each bind ATP.

This sequence belongs to the pantothenate synthetase family. In terms of assembly, homodimer.

The protein localises to the cytoplasm. It catalyses the reaction (R)-pantoate + beta-alanine + ATP = (R)-pantothenate + AMP + diphosphate + H(+). It functions in the pathway cofactor biosynthesis; (R)-pantothenate biosynthesis; (R)-pantothenate from (R)-pantoate and beta-alanine: step 1/1. Functionally, catalyzes the condensation of pantoate with beta-alanine in an ATP-dependent reaction via a pantoyl-adenylate intermediate. The polypeptide is Pantothenate synthetase (Helicobacter pylori (strain P12)).